Reading from the N-terminus, the 120-residue chain is Large ribosomal subunit protein bL17 (120 aa).

This sequence belongs to the bacterial ribosomal protein bL17 family. Part of the 50S ribosomal subunit. Contacts protein L32.

The protein is Large ribosomal subunit protein bL17 of Halalkalibacterium halodurans (strain ATCC BAA-125 / DSM 18197 / FERM 7344 / JCM 9153 / C-125) (Bacillus halodurans).